A 335-amino-acid polypeptide reads, in one-letter code: Transcription factor E2F5 (335 aa).

The span at 1–18 shows a compositional bias: low complexity; that stretch reads MAAAEPTSSAQPTPQAQA. Positions 1-40 are disordered; it reads MAAAEPTSSAQPTPQAQAQPPPHGAPSSQPSAALAGGSSR. Residues 37 to 108 mediate DNA binding; it reads GSSRHEKSLG…KNSIQWKGVG (72 aa). Residues 66–88 form a leucine-zipper region; it reads LKAAADTLAVRQKRRIYDITNVL. The DEF box signature appears at 71 to 108; that stretch reads DTLAVRQKRRIYDITNVLEGIDLIEKKSKNSIQWKGVG. Residues 109–205 form a dimerization region; the sequence is AGCNTKEVID…GQNGQKKYQI (97 aa). The segment at 226 to 285 is disordered; the sequence is SKPVVFPVPPPDDLTQPSSQSSTSVTPQKSTMAAQNLPEQHVSERSQTFQQTPAAEVSSG. Residues 238–256 are compositionally biased toward low complexity; that stretch reads DLTQPSSQSSTSVTPQKST. A transactivation region spans residues 277-335; it reads TPAAEVSSGSISGDIIDELMSSDVFPLLRLSPTPADDYNFNLDDNEGVCDLFDVQILNY. Residues 312–329 form an RBL2 association region; sequence DDYNFNLDDNEGVCDLFD.

The protein belongs to the E2F/DP family. As to quaternary structure, component of the DRTF1/E2F transcription factor complex. Binds cooperatively with DP-1 to E2F sites. Interaction with retinoblastoma protein RB1 or proteins RBL1 and RBL2 inhibits the E2F transactivation domain. Component of the DREAM complex (also named LINC complex) at least composed of E2F4, E2F5, LIN9, LIN37, LIN52, LIN54, MYBL1, MYBL2, RBL1, RBL2, RBBP4, TFDP1 and TFDP2. The complex exists in quiescent cells where it represses cell cycle-dependent genes. It dissociates in S phase when LIN9, LIN37, LIN52 and LIN54 form a subcomplex that binds to MYBL2.

The protein resides in the nucleus. Its function is as follows. Transcriptional activator that binds to E2F sites, these sites are present in the promoter of many genes whose products are involved in cell proliferation. May mediate growth factor-initiated signal transduction. It is likely involved in the early responses of resting cells to growth factor stimulation. Specifically required for multiciliate cell differentiation: together with MCIDAS and E2F5, binds and activate genes required for centriole biogenesis. The chain is Transcription factor E2F5 (E2f5) from Mus musculus (Mouse).